Here is a 76-residue protein sequence, read N- to C-terminus: Exodeoxyribonuclease 7 small subunit (76 aa).

Belongs to the XseB family. As to quaternary structure, heterooligomer composed of large and small subunits.

Its subcellular location is the cytoplasm. The enzyme catalyses Exonucleolytic cleavage in either 5'- to 3'- or 3'- to 5'-direction to yield nucleoside 5'-phosphates.. Its function is as follows. Bidirectionally degrades single-stranded DNA into large acid-insoluble oligonucleotides, which are then degraded further into small acid-soluble oligonucleotides. This chain is Exodeoxyribonuclease 7 small subunit, found in Legionella pneumophila (strain Paris).